The following is a 58-amino-acid chain: Large ribosomal subunit protein bL32 (58 aa).

Belongs to the bacterial ribosomal protein bL32 family.

The chain is Large ribosomal subunit protein bL32 from Prochlorococcus marinus (strain MIT 9515).